A 63-amino-acid chain; its full sequence is Conotoxin TeAr193 (63 aa).

A signal peptide spans 1–22; it reads MRCLPVFVILLLLIASAPSVDA. A propeptide spanning residues 23-48 is cleaved from the precursor; it reads QPKTKDDIPQASFLDNAKRYLQVLES.

This sequence belongs to the conotoxin T superfamily. Contains 2 disulfide bonds that can be either 'C1-C3, C2-C4' or 'C1-C4, C2-C3', since these disulfide connectivities have been observed for conotoxins with cysteine framework V (for examples, see AC P0DQQ7 and AC P81755). As to expression, expressed by the venom duct.

Its subcellular location is the secreted. In Conus textile (Cloth-of-gold cone), this protein is Conotoxin TeAr193.